The sequence spans 278 residues: Digeranylgeranylglyceryl phosphate synthase (278 aa).

Transmembrane regions (helical) follow at residues 17 to 37 (MASF…LEMV), 40 to 60 (LIFA…LNDI), 91 to 111 (LLVF…LMAV), 129 to 149 (IIGN…GGIA), 153 to 173 (IDVT…REII), 204 to 224 (LLLV…FFGI), 226 to 246 (YLIS…PLLI), and 257 to 277 (SRNI…GSFF).

The protein belongs to the UbiA prenyltransferase family. DGGGP synthase subfamily. It depends on Mg(2+) as a cofactor.

It localises to the cell membrane. The catalysed reaction is sn-3-O-(geranylgeranyl)glycerol 1-phosphate + (2E,6E,10E)-geranylgeranyl diphosphate = 2,3-bis-O-(geranylgeranyl)-sn-glycerol 1-phosphate + diphosphate. It functions in the pathway membrane lipid metabolism; glycerophospholipid metabolism. In terms of biological role, prenyltransferase that catalyzes the transfer of the geranylgeranyl moiety of geranylgeranyl diphosphate (GGPP) to the C2 hydroxyl of (S)-3-O-geranylgeranylglyceryl phosphate (GGGP). This reaction is the second ether-bond-formation step in the biosynthesis of archaeal membrane lipids. This Methanococcus maripaludis (strain C5 / ATCC BAA-1333) protein is Digeranylgeranylglyceryl phosphate synthase.